The primary structure comprises 348 residues: Selenide, water dikinase (348 aa).

Sec-17 is a catalytic residue. Sec-17 is a non-standard amino acid (selenocysteine). ATP is bound by residues Lys-20 and 48–50 (TAD). Position 51 (Asp-51) interacts with Mg(2+). ATP contacts are provided by residues Asp-68, Asp-91, and 138-140 (GHT). Asp-91 lines the Mg(2+) pocket. Asp-226 provides a ligand contact to Mg(2+).

Belongs to the selenophosphate synthase 1 family. Class I subfamily. Homodimer. Mg(2+) serves as cofactor.

It carries out the reaction hydrogenselenide + ATP + H2O = selenophosphate + AMP + phosphate + 2 H(+). In terms of biological role, synthesizes selenophosphate from selenide and ATP. In Clostridioides difficile (strain 630) (Peptoclostridium difficile), this protein is Selenide, water dikinase.